Consider the following 99-residue polypeptide: Large ribosomal subunit protein bL28 (99 aa).

A disordered region spans residues 1–25; it reads MSRKCAVTGKGVQTGNNVSHANNKS. Residues 11 to 22 show a composition bias toward polar residues; sequence GVQTGNNVSHAN.

This sequence belongs to the bacterial ribosomal protein bL28 family.

The protein is Large ribosomal subunit protein bL28 of Rhodospirillum centenum (strain ATCC 51521 / SW).